Here is a 127-residue protein sequence, read N- to C-terminus: Fluoride-specific ion channel FluC 1 (127 aa).

A run of 4 helical transmembrane segments spans residues Leu3–Trp23, Ile35–Tyr55, Ile74–Ile94, and Leu102–Tyr122. Na(+) is bound by residues Gly78 and Thr81.

This sequence belongs to the fluoride channel Fluc/FEX (TC 1.A.43) family.

Its subcellular location is the cell membrane. It catalyses the reaction fluoride(in) = fluoride(out). Its activity is regulated as follows. Na(+) is not transported, but it plays an essential structural role and its presence is essential for fluoride channel function. Functionally, fluoride-specific ion channel. Important for reducing fluoride concentration in the cell, thus reducing its toxicity. The protein is Fluoride-specific ion channel FluC 1 of Halalkalibacterium halodurans (strain ATCC BAA-125 / DSM 18197 / FERM 7344 / JCM 9153 / C-125) (Bacillus halodurans).